The primary structure comprises 973 residues: Protein HypA (973 aa).

The chain is Protein HypA (hypA) from Clostridium perfringens (strain 13 / Type A).